We begin with the raw amino-acid sequence, 1470 residues long: Niemann-Pick type C1-related protein (1470 aa).

Topologically, residues 1 to 3 (MFV) are cytoplasmic. An intramembrane segment occupies 4–34 (KNFIHKLKELKQKSLDKFANLLYDYGGYVYD). Position 35 (Arg35) is a topological domain, cytoplasmic. Residues 36–56 (PCTFIICSLICCLLLTCGFYF) form a helical membrane-spanning segment. The Extracellular portion of the chain corresponds to 57 to 493 (KEHEKDIYKL…DEVDRISKID (437 aa)). 4 N-linked (GlcNAc...) asparagine glycosylation sites follow: Asn78, Asn165, Asn294, and Asn361. The helical transmembrane segment at 494–514 (NLTRLLLLIGVLLIFMYALFN) threads the bilayer. Residues 494 to 653 (NLTRLLLLIG…LTFLLSFLCI (160 aa)) form the SSD domain. Topologically, residues 515 to 524 (NVTSVLYRSK) are cytoplasmic. Residues 525–549 (PLCAVMGIFCGFLGFLSGSGFLYFL) form a helical membrane-spanning segment. The Extracellular portion of the chain corresponds to 550 to 554 (GVKSV). A helical membrane pass occupies residues 555-582 (PPAETVPFLVIGVGVDDVFVILNSYSLL). Residues 583–587 (FMVKD) are Cytoplasmic-facing. The helical transmembrane segment at 588 to 619 (NKKRIQMCLKDSALAITVTTLTNIIAFLISAI) threads the bilayer. The Extracellular segment spans residues 620-622 (SPF). A helical membrane pass occupies residues 623-659 (YSICAFSLFTASSLFFGYLMVLTFLLSFLCIEAKLEK). Residues 660 to 663 (KKRN) are Cytoplasmic-facing. The stretch at 664 to 673 (IFTGTFHLFR) is an intramembrane region. Over 674–1057 (SIFMKSSKKN…IYEEPKGNIG (384 aa)) the chain is Cytoplasmic. The stretch at 1058-1073 (KYFRSLVKNYYVPFLS) is an intramembrane region. Ser1074 is a topological domain (cytoplasmic). The helical transmembrane segment at 1075-1098 (RFGKTIVYIMFTIIIAMSIYGCTL) threads the bilayer. At 1099–1300 (MKKGIKYDKA…NHNVQMVCFH (202 aa)) the chain is on the extracellular side. The N-linked (GlcNAc...) asparagine glycan is linked to Asn1218. A helical transmembrane segment spans residues 1301-1334 (LSSIFNETDESIIEVTLINLGITILTILVVTAYI). Topologically, residues 1335–1337 (IKG) are cytoplasmic. Residues 1338 to 1361 (FYSCVIIALIIFLIDLCIFGFMCL) traverse the membrane as a helical segment. Topologically, residues 1362 to 1367 (CGITMN) are extracellular. The helical transmembrane segment at 1368–1394 (IISMVILVLSVGFSIDHTSHIVQAFSH) threads the bilayer. The Cytoplasmic segment spans residues 1395–1399 (SMGRT). The chain crosses the membrane as a helical span at residues 1400 to 1431 (RDEKMKESLHLMIGPVLHSGLSTWFVISTLFF). Topologically, residues 1432-1434 (SNK) are extracellular. Residues 1435 to 1466 (DFTVIFFQTLSLVLFFSITFSSMFLPVLLSSF) traverse the membrane as a helical segment. Residues 1467–1470 (GPLH) are Cytoplasmic-facing.

It belongs to the patched family.

The protein localises to the cell membrane. It carries out the reaction cholesterol(in) = cholesterol(out). Its function is as follows. Facilitates cholesterol efflux from membranes in a pH-dependent manner. Required for maintaining normal parasite plasma membrane lipid composition. Required for the proper functioning of digestive vacuole. Required for the viability of blood-stage parasites. The polypeptide is Niemann-Pick type C1-related protein (Plasmodium falciparum (isolate 3D7)).